We begin with the raw amino-acid sequence, 200 residues long: Methylthioribulose-1-phosphate dehydratase (200 aa).

Zn(2+) is bound by residues His90 and His92.

This sequence belongs to the aldolase class II family. MtnB subfamily. Requires Zn(2+) as cofactor.

The enzyme catalyses 5-(methylsulfanyl)-D-ribulose 1-phosphate = 5-methylsulfanyl-2,3-dioxopentyl phosphate + H2O. It functions in the pathway amino-acid biosynthesis; L-methionine biosynthesis via salvage pathway; L-methionine from S-methyl-5-thio-alpha-D-ribose 1-phosphate: step 2/6. In terms of biological role, catalyzes the dehydration of methylthioribulose-1-phosphate (MTRu-1-P) into 2,3-diketo-5-methylthiopentyl-1-phosphate (DK-MTP-1-P). This Sodalis glossinidius (strain morsitans) protein is Methylthioribulose-1-phosphate dehydratase.